The primary structure comprises 399 residues: Phosphomevalonate dehydratase large subunit (399 aa).

Residues G54, V55, S56, N85, and P86 each coordinate (R)-5-phosphomevalonate. C125 contributes to the [4Fe-4S] cluster binding site. (R)-5-phosphomevalonate contacts are provided by E144 and S145. [4Fe-4S] cluster contacts are provided by C298 and C355. K375 lines the (R)-5-phosphomevalonate pocket.

The protein belongs to the AcnX type II large subunit family. In terms of assembly, heterodimer composed of a large subunit (PMDh-L) and a small subunit (PMDh-S). The cofactor is [4Fe-4S] cluster.

It catalyses the reaction (R)-5-phosphomevalonate = (2E)-3-methyl-5-phosphooxypent-2-enoate + H2O. It functions in the pathway isoprenoid biosynthesis; isopentenyl diphosphate biosynthesis via mevalonate pathway. Its function is as follows. Component of a hydro-lyase that catalyzes the dehydration of mevalonate 5-phosphate (MVA5P) to form trans-anhydromevalonate 5-phosphate (tAHMP). Involved in the archaeal mevalonate (MVA) pathway, which provides fundamental precursors for isoprenoid biosynthesis, such as isopentenyl diphosphate (IPP) and dimethylallyl diphosphate (DMAPP). The protein is Phosphomevalonate dehydratase large subunit of Methanothermobacter thermautotrophicus (strain ATCC 29096 / DSM 1053 / JCM 10044 / NBRC 100330 / Delta H) (Methanobacterium thermoautotrophicum).